A 115-amino-acid chain; its full sequence is Double-headed protease inhibitor, submandibular gland (115 aa).

Kazal-like domains follow at residues 6 to 66 (IGRE…ACDI) and 67 to 115 (ECTE…HGEC). Cystine bridges form between Cys12–Cys46, Cys24–Cys43, Cys32–Cys64, Cys68–Cys97, Cys75–Cys94, and Cys83–Cys115.

Its subcellular location is the secreted. Functionally, this inhibitor is composed of two homologous actively inhibiting halves: one which inhibits trypsin, the other which inhibits elastase. In Canis lupus familiaris (Dog), this protein is Double-headed protease inhibitor, submandibular gland.